Here is a 167-residue protein sequence, read N- to C-terminus: Lipoprotein signal peptidase (167 aa).

Transmembrane regions (helical) follow at residues 8-28 (TFLTLLLLASIDWVSKLVVLL), 46-66 (WGHFSFLIIPSFNEGAAFGLF), 68-88 (QYKIPLLIFRVCVILGLALFL), and 101-121 (VALTLILAGALGNVGDILLYG). Catalysis depends on residues aspartate 125 and aspartate 143. A helical transmembrane segment spans residues 139-159 (FNLADAFISIGTLLLIGHLYF).

This sequence belongs to the peptidase A8 family.

The protein localises to the cell inner membrane. The enzyme catalyses Release of signal peptides from bacterial membrane prolipoproteins. Hydrolyzes -Xaa-Yaa-Zaa-|-(S,diacylglyceryl)Cys-, in which Xaa is hydrophobic (preferably Leu), and Yaa (Ala or Ser) and Zaa (Gly or Ala) have small, neutral side chains.. The protein operates within protein modification; lipoprotein biosynthesis (signal peptide cleavage). Functionally, this protein specifically catalyzes the removal of signal peptides from prolipoproteins. This Chlamydia trachomatis serovar A (strain ATCC VR-571B / DSM 19440 / HAR-13) protein is Lipoprotein signal peptidase.